The sequence spans 268 residues: HLA class II histocompatibility antigen, DQ beta 2 chain (268 aa).

The N-terminal stretch at Met1–Ala32 is a signal peptide. A beta-1 region spans residues Arg33 to Val126. Residues Arg33–Lys229 are Extracellular-facing. 2 disulfides stabilise this stretch: Cys47-Cys110 and Cys148-Cys204. The N-linked (GlcNAc...) asparagine glycan is linked to Asn51. A beta-2 region spans residues Glu127–Lys229. In terms of domain architecture, Ig-like C1-type spans Pro128 to Thr216. The chain crosses the membrane as a helical span at residues Met230–Ile250. Topologically, residues Arg251 to His268 are cytoplasmic.

Belongs to the MHC class II family. As to quaternary structure, heterodimer of an alpha and a beta subunit; also referred as MHC class II molecule. Dimer formation with HLA-DQA2, but not with HLA-DQA1, is required for efficient exit from the endoplasmic reticulum (ER). In the ER, forms a heterononamer; 3 MHC class II molecules bind to a CD74 homotrimer (also known as invariant chain or HLA class II histocompatibility antigen gamma chain). In the endosomal/lysosomal system; CD74 undergoes sequential degradation by various proteases; leaving a small fragment termed CLIP on each MHC class II molecule. MHC class II molecule interacts with HLA_DM, and HLA_DO in B-cells, in order to release CLIP and facilitate the binding of antigenic peptides. Association with HLA-DMA also occurs in skin Langerhans cells, in post-Golgi compartments. In terms of tissue distribution, restricted to skin Langerhans cells (at protein level).

The protein localises to the cell membrane. The protein resides in the endoplasmic reticulum membrane. It localises to the golgi apparatus. It is found in the trans-Golgi network membrane. Its subcellular location is the endosome membrane. The protein localises to the lysosome membrane. Binds peptides derived from antigens that access the endocytic route of antigen presenting cells (APC) and presents them on the cell surface for recognition by the CD4 T-cells. The peptide binding cleft accommodates peptides of 10-30 residues. The peptides presented by MHC class II molecules are generated mostly by degradation of proteins that access the endocytic route, where they are processed by lysosomal proteases and other hydrolases. Exogenous antigens that have been endocytosed by the APC are thus readily available for presentation via MHC II molecules, and for this reason this antigen presentation pathway is usually referred to as exogenous. As membrane proteins on their way to degradation in lysosomes as part of their normal turn-over are also contained in the endosomal/lysosomal compartments, exogenous antigens must compete with those derived from endogenous components. Autophagy is also a source of endogenous peptides, autophagosomes constitutively fuse with MHC class II loading compartments. In addition to APCs, other cells of the gastrointestinal tract, such as epithelial cells, express MHC class II molecules and CD74 and act as APCs, which is an unusual trait of the GI tract. To produce a MHC class II molecule that presents an antigen, three MHC class II molecules (heterodimers of an alpha and a beta chain) associate with a CD74 trimer in the ER to form a heterononamer. Soon after the entry of this complex into the endosomal/lysosomal system where antigen processing occurs, CD74 undergoes a sequential degradation by various proteases, including CTSS and CTSL, leaving a small fragment termed CLIP (class-II-associated invariant chain peptide). The removal of CLIP is facilitated by HLA-DM via direct binding to the alpha-beta-CLIP complex so that CLIP is released. HLA-DM stabilizes MHC class II molecules until primary high affinity antigenic peptides are bound. The MHC II molecule bound to a peptide is then transported to the cell membrane surface. In B-cells, the interaction between HLA-DM and MHC class II molecules is regulated by HLA-DO. Primary dendritic cells (DCs) also to express HLA-DO. Lysosomal microenvironment has been implicated in the regulation of antigen loading into MHC II molecules, increased acidification produces increased proteolysis and efficient peptide loading. The sequence is that of HLA class II histocompatibility antigen, DQ beta 2 chain (HLA-DQB2) from Homo sapiens (Human).